We begin with the raw amino-acid sequence, 339 residues long: 4-hydroxythreonine-4-phosphate dehydrogenase (339 aa).

Substrate is bound by residues H141 and T142. A divalent metal cation-binding residues include H171, H215, and H270. 3 residues coordinate substrate: K278, N287, and R296.

It belongs to the PdxA family. In terms of assembly, homodimer. It depends on Zn(2+) as a cofactor. The cofactor is Mg(2+). Co(2+) is required as a cofactor.

It is found in the cytoplasm. The enzyme catalyses 4-(phosphooxy)-L-threonine + NAD(+) = 3-amino-2-oxopropyl phosphate + CO2 + NADH. Its pathway is cofactor biosynthesis; pyridoxine 5'-phosphate biosynthesis; pyridoxine 5'-phosphate from D-erythrose 4-phosphate: step 4/5. In terms of biological role, catalyzes the NAD(P)-dependent oxidation of 4-(phosphooxy)-L-threonine (HTP) into 2-amino-3-oxo-4-(phosphooxy)butyric acid which spontaneously decarboxylates to form 3-amino-2-oxopropyl phosphate (AHAP). The polypeptide is 4-hydroxythreonine-4-phosphate dehydrogenase (Geobacter metallireducens (strain ATCC 53774 / DSM 7210 / GS-15)).